Reading from the N-terminus, the 130-residue chain is Fumarate reductase subunit C (130 aa).

3 helical membrane passes run 34-54, 60-80, and 109-129; these read VPAV…KGGV, FVGF…LLAA, and IVKT…AVAL.

This sequence belongs to the FrdC family. As to quaternary structure, part of an enzyme complex containing four subunits: a flavoprotein (FrdA), an iron-sulfur protein (FrdB), and two hydrophobic anchor proteins (FrdC and FrdD).

The protein localises to the cell inner membrane. Its function is as follows. Two distinct, membrane-bound, FAD-containing enzymes are responsible for the catalysis of fumarate and succinate interconversion; fumarate reductase is used in anaerobic growth, and succinate dehydrogenase is used in aerobic growth. Anchors the catalytic components of the fumarate reductase complex to the cell inner membrane, binds quinones. The protein is Fumarate reductase subunit C of Serratia proteamaculans (strain 568).